The following is a 238-amino-acid chain: MGQAIFMTGTGTEIGKTVVTSIVALALERLGMSVSVLKPVQTGLAEDGVSFAEQYWYERVAKLSASEGMYYMEPAMSPHLAAKLTGTSIEPERVAERLEWLKQRYDVVLVEGAGGLAVPWCERDGRFYMTSDFLRDYQLPAILVSLSSLGAIHHAVTTAAYADAQGIRLLGLMFNQFQEQEIIHQNNVETIAALLRLPVLAVVPLLPAVSRRELETLAQHWIEQGKAKQLLEVLGVGV.

Residue 13-18 (EIGKTV) coordinates ATP. Thr-17 is a binding site for Mg(2+). Lys-38 is an active-site residue. Thr-42 is a binding site for substrate. Residues Arg-59 and Glu-111 each coordinate Mg(2+). Residues 111 to 114 (EGAG), 175 to 176 (NQ), and 204 to 206 (PLL) contribute to the ATP site.

The protein belongs to the dethiobiotin synthetase family. In terms of assembly, homodimer. Mg(2+) is required as a cofactor.

Its subcellular location is the cytoplasm. The catalysed reaction is (7R,8S)-7,8-diammoniononanoate + CO2 + ATP = (4R,5S)-dethiobiotin + ADP + phosphate + 3 H(+). It participates in cofactor biosynthesis; biotin biosynthesis; biotin from 7,8-diaminononanoate: step 1/2. Its function is as follows. Catalyzes a mechanistically unusual reaction, the ATP-dependent insertion of CO2 between the N7 and N8 nitrogen atoms of 7,8-diaminopelargonic acid (DAPA, also called 7,8-diammoniononanoate) to form a ureido ring. This Geobacillus kaustophilus (strain HTA426) protein is ATP-dependent dethiobiotin synthetase BioD.